Consider the following 270-residue polypeptide: Formamidopyrimidine-DNA glycosylase (270 aa).

Proline 2 serves as the catalytic Schiff-base intermediate with DNA. The Proton donor role is filled by glutamate 3. Lysine 57 functions as the Proton donor; for beta-elimination activity in the catalytic mechanism. The DNA site is built by histidine 90, arginine 109, and arginine 151. The segment at 236–270 (QVYGRGGKLCMVCSNRLKEVRLGQRSTVYCTQCQR) adopts an FPG-type zinc-finger fold. Catalysis depends on arginine 260, which acts as the Proton donor; for delta-elimination activity.

Belongs to the FPG family. As to quaternary structure, monomer. The cofactor is Zn(2+).

The enzyme catalyses Hydrolysis of DNA containing ring-opened 7-methylguanine residues, releasing 2,6-diamino-4-hydroxy-5-(N-methyl)formamidopyrimidine.. The catalysed reaction is 2'-deoxyribonucleotide-(2'-deoxyribose 5'-phosphate)-2'-deoxyribonucleotide-DNA = a 3'-end 2'-deoxyribonucleotide-(2,3-dehydro-2,3-deoxyribose 5'-phosphate)-DNA + a 5'-end 5'-phospho-2'-deoxyribonucleoside-DNA + H(+). Its function is as follows. Involved in base excision repair of DNA damaged by oxidation or by mutagenic agents. Acts as a DNA glycosylase that recognizes and removes damaged bases. Has a preference for oxidized purines, such as 7,8-dihydro-8-oxoguanine (8-oxoG). Has AP (apurinic/apyrimidinic) lyase activity and introduces nicks in the DNA strand. Cleaves the DNA backbone by beta-delta elimination to generate a single-strand break at the site of the removed base with both 3'- and 5'-phosphates. In Idiomarina loihiensis (strain ATCC BAA-735 / DSM 15497 / L2-TR), this protein is Formamidopyrimidine-DNA glycosylase.